The following is a 916-amino-acid chain: Isoleucine--tRNA ligase (916 aa).

A 'HIGH' region motif is present at residues 57 to 67; it reads PYANGNLHMGH. L-isoleucyl-5'-AMP is bound at residue E554. The 'KMSKS' region signature appears at 595–599; that stretch reads KMSKS. K598 lines the ATP pocket. Zn(2+)-binding residues include C885, C888, C905, and C908.

Belongs to the class-I aminoacyl-tRNA synthetase family. IleS type 1 subfamily. Monomer. It depends on Zn(2+) as a cofactor.

It localises to the cytoplasm. It carries out the reaction tRNA(Ile) + L-isoleucine + ATP = L-isoleucyl-tRNA(Ile) + AMP + diphosphate. Catalyzes the attachment of isoleucine to tRNA(Ile). As IleRS can inadvertently accommodate and process structurally similar amino acids such as valine, to avoid such errors it has two additional distinct tRNA(Ile)-dependent editing activities. One activity is designated as 'pretransfer' editing and involves the hydrolysis of activated Val-AMP. The other activity is designated 'posttransfer' editing and involves deacylation of mischarged Val-tRNA(Ile). The chain is Isoleucine--tRNA ligase from Staphylococcus epidermidis (strain ATCC 12228 / FDA PCI 1200).